An 883-amino-acid chain; its full sequence is Lethal(3)malignant brain tumor-like protein 3 (883 aa).

The segment at 1-64 is interaction with RBPJ. Required for transcription repressor activity on Notch target genes; sequence MTESASSTSG…VKKATATTTW (64 aa). Basic and acidic residues predominate over residues 146–156; sequence HAKDKDQKDER. The segment at 146-223 is disordered; it reads HAKDKDQKDE…RGDSAVLKQG (78 aa). 2 stretches are compositionally biased toward acidic residues: residues 157-166 and 185-194; these read DGGEDNDEED and DDGEERDDEM. 3 MBT repeats span residues 232–332, 340–439, and 448–543; these read WCWA…LRPP, FNWQ…LITP, and FSWD…LQAP. The CCHHC-type; degenerate zinc finger occupies 549–593; the sequence is LMEPSETGGCPTLGCRGVGHFKKSRYLGTQSGANCPYSEINLSKE. Residues 595–768 form a disordered region; that stretch reads IFPDRLSGDT…TQQQAQTQQQ (174 aa). The span at 616-662 shows a compositional bias: basic and acidic residues; that stretch reads KRMDTRESSSSPETREKHANNFKEDSEKKKENEVKTSAEAKVVREEP. Lysine 638 is covalently cross-linked (Glycyl lysine isopeptide (Lys-Gly) (interchain with G-Cter in SUMO2)). Low complexity-rich tracts occupy residues 663 to 742 and 749 to 768; these read TPSV…QQPQ and QPQQ…TQQQ. Positions 811-875 constitute an SAM domain; the sequence is WSTDEVSEFI…FNSILMFKAA (65 aa).

In terms of assembly, interacts with RNF2. Interacts (via SAM domain) with SAMD1 (via SAM domain); the interaction mediates L3MBTL3 binding to chromatin. Interacts with RBPJ; the interaction is required for L3MBTL3 localization to chromatin and is impaired the Notch-derived peptides containing the intracellular domain (NICD). Interacts (via SAM domain) with KDM1A. Interacts with DCAF5. Interacts with DNMT1. Interacts with E2F1. Interacts with SOX2. Interacts with SFMBT1. As to expression, detected in hematopoietic progenitor cells in fetal liver. Detected in adult bone marrow, heart, brain, spleen, lung, liver, kidney and testis.

It localises to the nucleus. Functionally, is a negative regulator of Notch target genes expression, required for RBPJ-mediated transcriptional repression. It recruits KDM1A to Notch-responsive elements and promotes KDM1A-mediated H3K4me demethylation. Involved in the regulation of ubiquitin-dependent degradation of a set of methylated non-histone proteins, including SOX2. It acts as an adapter recruiting the CRL4-DCAF5 E3 ubiquitin ligase complex to methylated target proteins. Also involved in the regulation of ubiquitin-dependent degradation of methylated DNMT1 and E2F1. Required for normal maturation of myeloid progenitor cells. In Mus musculus (Mouse), this protein is Lethal(3)malignant brain tumor-like protein 3.